Reading from the N-terminus, the 462-residue chain is Argininosuccinate lyase (462 aa).

The protein belongs to the lyase 1 family. Argininosuccinate lyase subfamily.

It is found in the cytoplasm. It catalyses the reaction 2-(N(omega)-L-arginino)succinate = fumarate + L-arginine. Its pathway is amino-acid biosynthesis; L-arginine biosynthesis; L-arginine from L-ornithine and carbamoyl phosphate: step 3/3. The sequence is that of Argininosuccinate lyase from Bacillus cytotoxicus (strain DSM 22905 / CIP 110041 / 391-98 / NVH 391-98).